The sequence spans 338 residues: Glyceraldehyde-3-phosphate dehydrogenase (338 aa).

NAD(+)-binding positions include 12-13 (RI), D34, and R79. Residues 150 to 152 (SCT), T181, 210 to 211 (TG), and R233 each bind D-glyceraldehyde 3-phosphate. Residue C151 is the Nucleophile of the active site. N315 is a binding site for NAD(+).

This sequence belongs to the glyceraldehyde-3-phosphate dehydrogenase family. Homotetramer.

The protein resides in the cytoplasm. It carries out the reaction D-glyceraldehyde 3-phosphate + phosphate + NAD(+) = (2R)-3-phospho-glyceroyl phosphate + NADH + H(+). It functions in the pathway carbohydrate degradation; glycolysis; pyruvate from D-glyceraldehyde 3-phosphate: step 1/5. The chain is Glyceraldehyde-3-phosphate dehydrogenase (gpd-1) from Neurospora crassa (strain ATCC 24698 / 74-OR23-1A / CBS 708.71 / DSM 1257 / FGSC 987).